The following is an 84-amino-acid chain: ATP synthase subunit c (84 aa).

The next 2 membrane-spanning stretches (helical) occupy residues 9–29 (IIGASILLAFAALGTAIGFAI) and 54–74 (IVAGLLDAIAMIAVGISLLFI).

This sequence belongs to the ATPase C chain family. F-type ATPases have 2 components, F(1) - the catalytic core - and F(0) - the membrane proton channel. F(1) has five subunits: alpha(3), beta(3), gamma(1), delta(1), epsilon(1). F(0) has three main subunits: a(1), b(2) and c(10-14). The alpha and beta chains form an alternating ring which encloses part of the gamma chain. F(1) is attached to F(0) by a central stalk formed by the gamma and epsilon chains, while a peripheral stalk is formed by the delta and b chains.

The protein localises to the cell inner membrane. F(1)F(0) ATP synthase produces ATP from ADP in the presence of a proton or sodium gradient. F-type ATPases consist of two structural domains, F(1) containing the extramembraneous catalytic core and F(0) containing the membrane proton channel, linked together by a central stalk and a peripheral stalk. During catalysis, ATP synthesis in the catalytic domain of F(1) is coupled via a rotary mechanism of the central stalk subunits to proton translocation. Functionally, key component of the F(0) channel; it plays a direct role in translocation across the membrane. A homomeric c-ring of between 10-14 subunits forms the central stalk rotor element with the F(1) delta and epsilon subunits. This chain is ATP synthase subunit c, found in Actinobacillus pleuropneumoniae serotype 7 (strain AP76).